Consider the following 605-residue polypeptide: Arginine--tRNA ligase (605 aa).

The short motif at Ala-131–His-141 is the 'HIGH' region element. Positions Pro-290–Ala-309 are disordered. Positions Gln-298–Ala-309 are enriched in low complexity.

The protein belongs to the class-I aminoacyl-tRNA synthetase family. As to quaternary structure, monomer.

Its subcellular location is the cytoplasm. It carries out the reaction tRNA(Arg) + L-arginine + ATP = L-arginyl-tRNA(Arg) + AMP + diphosphate. In Anaeromyxobacter sp. (strain Fw109-5), this protein is Arginine--tRNA ligase.